Here is a 1374-residue protein sequence, read N- to C-terminus: MKVSDRRKFEKANFDEFESALNNKNDLVHCPSITLFESIPTEVRSFYEDEKSGLIKVVKFRTGAMDRKRSFEKIVVSVMVGKNVQKFLTFVEDEPDFQGGPIPSKYLIPKKINLMVYTLFQVHTLKFNRKDYDTLSLFYLNRGYYNELSFRVLERCHEIASARPNDSSTMRTFTDFVSGAPIVRSLQKSTIRRYGYNLAPHMFLLLHVDELSIFSAYQASLPGEKKVDTERLKRDLCPRKPIEIKYFSQICNDMMNKKDRLGDVLATAQRIRRRYNKNGSSEPRLKTLDGLTSERWIQWLGLESDYHCSFSSTRNAEDVVAGEAASSDHDQKISRVTRKRPREPKSTNDILVAGQKLFGSSFEFRDLHQLRLCHEIYMADTPSVAVQAPPGYGKTELFHLPLIALASKGDVKYVSFLFVPYTVLLANCMIRLGRCGCLNVAPVRNFIEEGCDGVTDLYVGIYDDLASTNFTDRIAAWENIVECTFRTNNVKLGYLIVDEFHNFETEVYRQSQFGGITNLDFDAFEKAIFLSGTAPEAVADAALQRIGLTGLAKKSMDINELKRSEDLSRGLSSYPTRMFNLIKEKSEVPLGHVHKIWKKVESQPEEALKLLLALFEIEPESKAIVVASTTNEVEELACSWRKYFRVVWIHGKLGAAEKVSRTKEFVTDGSMRVLIGTKLVTEGIDIKQLMMVIMLDNRLNIIELIQGVGRLRDGGLCYLLSRKNSWAARNRKGELPPIKEGCITEQVREFYGLESKKGKKGQHVGCCGSRTDLSADTVELIERMDRLAEKQATASMSIVALPSSFQESNSSDRCRKYCSSDEDSNTCIHGSANASTNATTNSSTNATTTASTNVRTSATTTASINVRTSATTTESTNSSTNATTTASTNVRTSATTTASINVRTSATTTESTNSNTSATTTESTDSNTSATTTESTDSNTSATTTASTNSSTNATTTASTNSSTNATTTESTNASAKEDANKDGNAEDNRFHPVTDINKESYKRKGSQMVLLERKKLKAQFPNTSENMNVLQFLGFRSDEIKHLFLYGIDIYFCPEGVFTQYGLCKGCQKMFGLCVCWAGQKVSYRRMAWEALAVERMLRNDEEYKEYLEDIEPYHGDPVGYLKFFSVKRGEIYSQIQRNYAWYLAITRRRETISVLDSTRGKQGSQVFRMSGRQIKELYYKVWSNLRESKTEVLQYFLNWDEKKCREEWEAKDDTVFVEALEKVGVFQRLRSMTSAGLQGPQYVKLQFSRHHRQLRSRYELSLGMHLRDQLALGVTPSKVPHWTAFLSMLIGLFYNKTFRQKLEYLLEQISEVWLLPHWVDLANVEVLAADNTRVPLYMLMVAVHKELDSDDVPDGRFDIILLCRDSSREVGE.

Positions Ala-321–Lys-345 are disordered. The Helicase ATP-binding domain occupies Glu-375–Ala-552. Residue Ala-388 to Thr-395 coordinates ATP. Residues Asp-498–His-501 carry the DEAH box motif. A Helicase C-terminal domain is found at Lys-609 to Gly-758. Positions Ala-832–Ser-975 are enriched in low complexity. The tract at residues Ala-832 to Lys-999 is disordered. Residues Ala-976–Lys-999 are compositionally biased toward basic and acidic residues.

Belongs to the helicase family. Yeast subtelomeric Y' repeat subfamily.

Catalyzes DNA unwinding and is involved in telomerase-independent telomere maintenance. This chain is Y' element ATP-dependent helicase YLL066C, found in Saccharomyces cerevisiae (strain ATCC 204508 / S288c) (Baker's yeast).